The primary structure comprises 177 residues: Ribosome rescue factor SmrB (177 aa).

One can recognise a Smr domain in the interval 98–173; the sequence is LDMHGMKQDE…GAGAILVLLS (76 aa).

This sequence belongs to the SmrB family. Associates with collided ribosomes, but not with correctly translating polysomes.

Acts as a ribosome collision sensor. Detects stalled/collided disomes (pairs of ribosomes where the leading ribosome is stalled and a second ribosome has collided with it) and endonucleolytically cleaves mRNA at the 5' boundary of the stalled ribosome. Stalled/collided disomes form a new interface (primarily via the 30S subunits) that binds SmrB. Cleaved mRNA becomes available for tmRNA ligation, leading to ribosomal subunit dissociation and rescue of stalled ribosomes. In Aliivibrio fischeri (strain ATCC 700601 / ES114) (Vibrio fischeri), this protein is Ribosome rescue factor SmrB.